We begin with the raw amino-acid sequence, 467 residues long: Ethanolamine ammonia-lyase reactivase EutA (467 aa).

This sequence belongs to the EutA family.

It is found in the bacterial microcompartment. It functions in the pathway amine and polyamine degradation; ethanolamine degradation. Its function is as follows. Reactivates suicidally inhibited ethanolamine ammonia-lyase (EAL), cyanocobalamin-inactivated EAL and O(2)-inactivated EAL; requires Mg(2+), ATP and adenosylcobalamin. Reactivation probably occurs by the ATP-dependent exchange of cobalamin. Protects EAL from inhibition by CN-B12, does not have adenosylation activity. Functionally, expression of the eut operon allows this bacteria to use ethanolamine as a carbon, nitrogen and energy source. It relies on cobalamin (vitamin B12) both as a cofactor for the ethanolamine ammonia-lyase (EAL) activity and to induce the operon. EA enhances bacterial survival in macrophages in a concentration-dependent manner, suggesting it is an important nutrient during infection. The protein is Ethanolamine ammonia-lyase reactivase EutA of Salmonella typhimurium (strain LT2 / SGSC1412 / ATCC 700720).